The primary structure comprises 104 residues: Ribonuclease P protein component 4 (104 aa).

Zn(2+)-binding residues include Cys-57, Cys-60, Cys-83, and Cys-86.

This sequence belongs to the eukaryotic/archaeal RNase P protein component 4 family. In terms of assembly, consists of a catalytic RNA component and at least 4-5 protein subunits. Requires Zn(2+) as cofactor.

The protein resides in the cytoplasm. The enzyme catalyses Endonucleolytic cleavage of RNA, removing 5'-extranucleotides from tRNA precursor.. Functionally, part of ribonuclease P, a protein complex that generates mature tRNA molecules by cleaving their 5'-ends. The polypeptide is Ribonuclease P protein component 4 (Saccharolobus islandicus (strain M.16.27) (Sulfolobus islandicus)).